We begin with the raw amino-acid sequence, 181 residues long: ATP synthase subunit delta (181 aa).

Belongs to the ATPase delta chain family. F-type ATPases have 2 components, F(1) - the catalytic core - and F(0) - the membrane proton channel. F(1) has five subunits: alpha(3), beta(3), gamma(1), delta(1), epsilon(1). F(0) has three main subunits: a(1), b(2) and c(10-14). The alpha and beta chains form an alternating ring which encloses part of the gamma chain. F(1) is attached to F(0) by a central stalk formed by the gamma and epsilon chains, while a peripheral stalk is formed by the delta and b chains.

It is found in the cell membrane. Functionally, f(1)F(0) ATP synthase produces ATP from ADP in the presence of a proton or sodium gradient. F-type ATPases consist of two structural domains, F(1) containing the extramembraneous catalytic core and F(0) containing the membrane proton channel, linked together by a central stalk and a peripheral stalk. During catalysis, ATP synthesis in the catalytic domain of F(1) is coupled via a rotary mechanism of the central stalk subunits to proton translocation. In terms of biological role, this protein is part of the stalk that links CF(0) to CF(1). It either transmits conformational changes from CF(0) to CF(1) or is implicated in proton conduction. The polypeptide is ATP synthase subunit delta (Clostridium kluyveri (strain NBRC 12016)).